The following is a 355-amino-acid chain: CX3C chemokine receptor 1 (355 aa).

Residues 1–31 (MDQFPESVTENFEYDDLAEACYIGDIVVFGT) lie on the Extracellular side of the membrane. A helical membrane pass occupies residues 32-59 (VFLSIFYSVIFAIGLVGNLLVVFALTNS). At 60–69 (KKPKSVTDIY) the chain is on the cytoplasmic side. The helical transmembrane segment at 70–90 (LLNLALSDLLFVATLPFWTHY) threads the bilayer. Residues 91-103 (LINEKGLHNAMCK) lie on the Extracellular side of the membrane. Cys-102 and Cys-175 form a disulfide bridge. A helical transmembrane segment spans residues 104–125 (FTTAFFFIGFFGSIFFITVISI). At 126–142 (DRYLAIVLAANSMNNRT) the chain is on the cytoplasmic side. Residues 143–167 (VQHGVTISLGVWAAAILVAAPQFMF) traverse the membrane as a helical segment. The Extracellular portion of the chain corresponds to 168-195 (TKQKENECLGDYPEVLQEIWPVLRNVET). Residues 196 to 215 (NFLGFLLPLLIMSYCYFRII) traverse the membrane as a helical segment. Residues 216 to 231 (QTLFSCKNHKKAKAIK) lie on the Cytoplasmic side of the membrane. A helical membrane pass occupies residues 232 to 256 (LILLVVIVFFLFWTPYNVMIFLETL). Over 257 to 273 (KLYDFFPSCDMRKDLRL) the chain is Extracellular. Residues 274-297 (ALSVTETVAFSHCCLNPLIYAFAG) form a helical membrane-spanning segment. Over 298–355 (EKFRRYLYHLYGKCLAVLCGRSVHVDFSSSESQRSRHGSVLSSNFTYHTSDGDALLLL) the chain is Cytoplasmic. Thr-346 bears the Phosphothreonine mark.

The protein belongs to the G-protein coupled receptor 1 family. As to quaternary structure, found in a ternary complex with CX3CL1 and ITGAV:ITGB3 or ITGA4:ITGB1. (Microbial infection) Interacts with human respiratory syncytial virus (HRSV) protein G; this interaction modulates host immune response. In terms of assembly, (Microbial infection) Interacts with HIV-1 envelope polyprotein gp160. This protein is not N-glycosylated which is unusual for G-protein-coupled receptors. As to expression, expressed in lymphoid and neural tissues. Expressed in lymphocyte subsets, such as natural killer (NK) cells, gamma-delta T-cells and terminally differentiated CD8(+) T-cells. Expressed in smooth muscle cells in atherosclerotic plaques.

It localises to the cell membrane. Its function is as follows. Receptor for the C-X3-C chemokine fractalkine (CX3CL1) present on many early leukocyte cells; CX3CR1-CX3CL1 signaling exerts distinct functions in different tissue compartments, such as immune response, inflammation, cell adhesion and chemotaxis. CX3CR1-CX3CL1 signaling mediates cell migratory functions. Responsible for the recruitment of natural killer (NK) cells to inflamed tissues. Acts as a regulator of inflammation process leading to atherogenesis by mediating macrophage and monocyte recruitment to inflamed atherosclerotic plaques, promoting cell survival. Involved in airway inflammation by promoting interleukin 2-producing T helper (Th2) cell survival in inflamed lung. Involved in the migration of circulating monocytes to non-inflamed tissues, where they differentiate into macrophages and dendritic cells. Acts as a negative regulator of angiogenesis, probably by promoting macrophage chemotaxis. Plays a key role in brain microglia by regulating inflammatory response in the central nervous system (CNS) and regulating synapse maturation. Required to restrain the microglial inflammatory response in the CNS and the resulting parenchymal damage in response to pathological stimuli. Involved in brain development by participating in synaptic pruning, a natural process during which brain microglia eliminates extra synapses during postnatal development. Synaptic pruning by microglia is required to promote the maturation of circuit connectivity during brain development. Acts as an important regulator of the gut microbiota by controlling immunity to intestinal bacteria and fungi. Expressed in lamina propria dendritic cells in the small intestine, which form transepithelial dendrites capable of taking up bacteria in order to provide defense against pathogenic bacteria. Required to initiate innate and adaptive immune responses against dissemination of commensal fungi (mycobiota) component of the gut: expressed in mononuclear phagocytes (MNPs) and acts by promoting induction of antifungal IgG antibodies response to confer protection against disseminated C.albicans or C.auris infection. Also acts as a receptor for C-C motif chemokine CCL26, inducing cell chemotaxis. In terms of biological role, (Microbial infection) Acts as a coreceptor with CD4 for HIV-1 virus envelope protein. (Microbial infection) Acts as a coreceptor with CD4 for HIV-1 virus envelope protein. May have more potent HIV-1 coreceptothr activity than isoform 1. Functionally, (Microbial infection) Acts as a coreceptor with CD4 for HIV-1 virus envelope protein. May have more potent HIV-1 coreceptor activity than isoform 1. The sequence is that of CX3C chemokine receptor 1 from Homo sapiens (Human).